The sequence spans 356 residues: Holliday junction branch migration complex subunit RuvB (356 aa).

Residues 4 to 190 form a large ATPase domain (RuvB-L) region; it reads TDKLAAERII…FGIVARLEFY (187 aa). ATP is bound by residues Leu-29, Arg-30, Gly-71, Lys-74, Thr-75, Thr-76, 137-139, Arg-180, Tyr-190, and Arg-227; that span reads EDY. A Mg(2+)-binding site is contributed by Thr-75. Positions 191–261 are small ATPAse domain (RuvB-S); it reads DAEQLSRIVR…VADAALAMLD (71 aa). The interval 264 to 356 is head domain (RuvB-H); the sequence is PVGFDLMDRK…NLWDTPDAER (93 aa). Residues Arg-300, Arg-319, and Arg-324 each coordinate DNA.

The protein belongs to the RuvB family. As to quaternary structure, homohexamer. Forms an RuvA(8)-RuvB(12)-Holliday junction (HJ) complex. HJ DNA is sandwiched between 2 RuvA tetramers; dsDNA enters through RuvA and exits via RuvB. An RuvB hexamer assembles on each DNA strand where it exits the tetramer. Each RuvB hexamer is contacted by two RuvA subunits (via domain III) on 2 adjacent RuvB subunits; this complex drives branch migration. In the full resolvosome a probable DNA-RuvA(4)-RuvB(12)-RuvC(2) complex forms which resolves the HJ.

The protein resides in the cytoplasm. It catalyses the reaction ATP + H2O = ADP + phosphate + H(+). Functionally, the RuvA-RuvB-RuvC complex processes Holliday junction (HJ) DNA during genetic recombination and DNA repair, while the RuvA-RuvB complex plays an important role in the rescue of blocked DNA replication forks via replication fork reversal (RFR). RuvA specifically binds to HJ cruciform DNA, conferring on it an open structure. The RuvB hexamer acts as an ATP-dependent pump, pulling dsDNA into and through the RuvAB complex. RuvB forms 2 homohexamers on either side of HJ DNA bound by 1 or 2 RuvA tetramers; 4 subunits per hexamer contact DNA at a time. Coordinated motions by a converter formed by DNA-disengaged RuvB subunits stimulates ATP hydrolysis and nucleotide exchange. Immobilization of the converter enables RuvB to convert the ATP-contained energy into a lever motion, pulling 2 nucleotides of DNA out of the RuvA tetramer per ATP hydrolyzed, thus driving DNA branch migration. The RuvB motors rotate together with the DNA substrate, which together with the progressing nucleotide cycle form the mechanistic basis for DNA recombination by continuous HJ branch migration. Branch migration allows RuvC to scan DNA until it finds its consensus sequence, where it cleaves and resolves cruciform DNA. The polypeptide is Holliday junction branch migration complex subunit RuvB (Burkholderia thailandensis (strain ATCC 700388 / DSM 13276 / CCUG 48851 / CIP 106301 / E264)).